The chain runs to 96 residues: Large ribosomal subunit protein eL43 (96 aa).

Residues 41–62 (CPVCAFPKLKRVGTSIWVCDKC) form a C4-type zinc finger.

This sequence belongs to the eukaryotic ribosomal protein eL43 family. Requires Zn(2+) as cofactor.

In Methanococcus maripaludis (strain C6 / ATCC BAA-1332), this protein is Large ribosomal subunit protein eL43.